The sequence spans 267 residues: Tryptophan synthase alpha chain (267 aa).

Catalysis depends on proton acceptor residues glutamate 44 and aspartate 55.

This sequence belongs to the TrpA family. Tetramer of two alpha and two beta chains.

It carries out the reaction (1S,2R)-1-C-(indol-3-yl)glycerol 3-phosphate + L-serine = D-glyceraldehyde 3-phosphate + L-tryptophan + H2O. Its pathway is amino-acid biosynthesis; L-tryptophan biosynthesis; L-tryptophan from chorismate: step 5/5. In terms of biological role, the alpha subunit is responsible for the aldol cleavage of indoleglycerol phosphate to indole and glyceraldehyde 3-phosphate. The sequence is that of Tryptophan synthase alpha chain from Coxiella burnetii (strain Dugway 5J108-111).